The sequence spans 358 residues: GDSL esterase/lipase EXL5 (358 aa).

An N-terminal signal peptide occupies residues 1–21; the sequence is MFRKKMLVLALFSIYFLSIEA. Residue Asn24 is glycosylated (N-linked (GlcNAc...) asparagine). Ser36 acts as the Nucleophile in catalysis. Active-site residues include Asp333 and His336.

It belongs to the 'GDSL' lipolytic enzyme family. Flower buds.

The protein localises to the secreted. In Arabidopsis thaliana (Mouse-ear cress), this protein is GDSL esterase/lipase EXL5 (EXL5).